The sequence spans 45 residues: Metallothionein-like protein 1C (45 aa).

This sequence belongs to the metallothionein superfamily. Type 15 family. Widely expressed at low levels.

Functionally, metallothioneins have a high content of cysteine residues that bind various heavy metals. Confers tolerance to cadmium (Cd) and plays a role in Cd and zinc (Zn) homeostasis. The polypeptide is Metallothionein-like protein 1C (MT1C) (Arabidopsis thaliana (Mouse-ear cress)).